We begin with the raw amino-acid sequence, 350 residues long: MTVSNIGGEERLIILPDDYETSKTINTFTLPPPSNITSKPRIELFENINGKLYEIRSFQFGKGPSYSHEEDLANDKYHYTKENHPIKSTFIVNTSDPTDGYVFNSSKIHFCSLYDIAFSLIGFYYRNSVSADEQDYSNSSDTGENQKSNSKTNEKFLTVRDYHDFLTDNHDKNWENISLSRLKSGLAKVSETIEEAGDVYYKITSAMITQFLLGKVSKIVENFPPSIPTLKNAPTEIKQCYKVVMATNLLVSLIPRAAYHNLLTFSPTMDSGCLNPDIKASFIELENYETTNELQNAERELLMKSAMNVGLNSNGRVSLPVKKVTKKIVQNKKPKVAIGKGAIDGFFKRK.

Residues Q134 to K151 are compositionally biased toward polar residues. Residues Q134 to N153 form a disordered region.

Belongs to the RNase H2 subunit B family. Highly divergent. In terms of assembly, the RNase 2 complex is a heterotrimer composed of the catalytic subunit RNH201 and of the non-catalytic subunits RNH202 and RNH203.

Its subcellular location is the nucleus. Non catalytic subunit of RNase H2, an endonuclease that specifically degrades the RNA of RNA:DNA hybrids. Participates in DNA replication, possibly by mediating the removal of lagging-strand Okazaki fragment RNA primers during DNA replication. Mediates the excision of single ribonucleotides from DNA:RNA duplexes. This chain is Ribonuclease H2 subunit B (RNH202), found in Saccharomyces cerevisiae (strain ATCC 204508 / S288c) (Baker's yeast).